The chain runs to 123 residues: Ribosome-binding factor A (123 aa).

The protein belongs to the RbfA family. In terms of assembly, monomer. Binds 30S ribosomal subunits, but not 50S ribosomal subunits or 70S ribosomes.

The protein resides in the cytoplasm. One of several proteins that assist in the late maturation steps of the functional core of the 30S ribosomal subunit. Associates with free 30S ribosomal subunits (but not with 30S subunits that are part of 70S ribosomes or polysomes). Required for efficient processing of 16S rRNA. May interact with the 5'-terminal helix region of 16S rRNA. The protein is Ribosome-binding factor A of Chlamydia trachomatis serovar L2 (strain ATCC VR-902B / DSM 19102 / 434/Bu).